We begin with the raw amino-acid sequence, 64 residues long: Alpha-conotoxin GI (64 aa).

A signal peptide spans 1–21; it reads MGMRMMFTVFLLVVLATTVVS. The propeptide occupies 22 to 49; it reads FPSERASDGRDDTAKDEGSDMDKLVEKK. 2 disulfides stabilise this stretch: Cys51/Cys56 and Cys52/Cys62. The residue at position 62 (Cys62) is a Cysteine amide.

The protein belongs to the conotoxin A superfamily. In terms of processing, not hydroxylated; hydroxylation, on a synthetic hydroxylated GI, improves its folding but impairs its activity against target receptors. Expressed by the venom duct.

Its subcellular location is the secreted. Alpha-conotoxins act on postsynaptic membranes, they bind to the nicotinic acetylcholine receptors (nAChR) and thus inhibit them. Reversibly inhibits mammalian muscle nAChR (IC(50)=339 nM on adult subtype (alpha-1-beta-1-gamma-delta/CHRNA1-CHRNB1-CHRNG-CHRND) and IC(50)=5.86-995 nM on fetal subtype (alpha-1-beta-1-delta-epsilon/CHRNA1-CHRNB1-CHRND-CHRNE)). The higher affinity site is the alpha/delta site on mouse muscle-derived BC3H-1 receptor, and the other site (alpha/gamma site) on nicotinic receptors from Torpedo californica electric organ. The chain is Alpha-conotoxin GI from Conus geographus (Geography cone).